Consider the following 433-residue polypeptide: ATP-dependent protease ATPase subunit HslU (433 aa).

Residues Val18, 60-65 (GVGKTE), Asp246, Glu311, and Arg383 each bind ATP.

This sequence belongs to the ClpX chaperone family. HslU subfamily. In terms of assembly, a double ring-shaped homohexamer of HslV is capped on each side by a ring-shaped HslU homohexamer. The assembly of the HslU/HslV complex is dependent on binding of ATP.

The protein resides in the cytoplasm. Functionally, ATPase subunit of a proteasome-like degradation complex; this subunit has chaperone activity. The binding of ATP and its subsequent hydrolysis by HslU are essential for unfolding of protein substrates subsequently hydrolyzed by HslV. HslU recognizes the N-terminal part of its protein substrates and unfolds these before they are guided to HslV for hydrolysis. The protein is ATP-dependent protease ATPase subunit HslU of Nitrobacter hamburgensis (strain DSM 10229 / NCIMB 13809 / X14).